Reading from the N-terminus, the 134-residue chain is SNAPIN protein homolog (134 aa).

Positions 50-124 (QLQAELRGQL…EKEQRRRQAL (75 aa)) form a coiled coil.

This sequence belongs to the SNAPIN family. As to quaternary structure, component of the biogenesis of lysosome-related organelles complex-1 (BLOC-1) composed of Blos1, Blos2, Blos3, Blos4, Dysb, Muted, Pldn and Snapin. Interacts with Blos2 and Dysb.

It is found in the membrane. Its subcellular location is the cytoplasm. The protein resides in the cytosol. Component of the biogenesis of lysosome-related organelles complex-1 (BLOC-1) involved in pigment granule biogenesis. May participate in the coupling of lysosomes to microtubule plus-end-directed kinesin motor. In Drosophila melanogaster (Fruit fly), this protein is SNAPIN protein homolog.